The following is a 1962-amino-acid chain: Sodium channel protein type 10 subunit alpha (1962 aa).

The Cytoplasmic portion of the chain corresponds to Met-1–Lys-125. Positions Gln-32–Asp-56 are disordered. The span at Ala-33 to Arg-42 shows a compositional bias: basic residues. The span at Glu-43–Leu-55 shows a compositional bias: basic and acidic residues. The I repeat unit spans residues Phe-116–Gln-414. Residues Val-126–Gln-149 form a helical membrane-spanning segment. At Thr-150–Asp-154 the chain is on the extracellular side. A helical membrane pass occupies residues Arg-155–Ala-174. Residues Arg-175 to Asp-187 lie on the Cytoplasmic side of the membrane. A helical transmembrane segment spans residues Pro-188–Thr-206. At Ala-207–Ser-212 the chain is on the extracellular side. Residues Gly-213 to Leu-232 traverse the membrane as a helical; Voltage-sensor segment. The Cytoplasmic segment spans residues Lys-233 to Asp-248. A helical transmembrane segment spans residues Val-249–Leu-272. The Extracellular segment spans residues Lys-273–Ser-350. Cys-276 and Cys-328 are oxidised to a cystine. Asn-284, Asn-288, Asn-321, and Asn-344 each carry an N-linked (GlcNAc...) asparagine glycan. Residues Phe-351–Leu-375 constitute an intramembrane region (pore-forming). The Extracellular portion of the chain corresponds to Arg-376 to Tyr-382. The chain crosses the membrane as a helical span at residues Met-383–Ala-408. Residues Tyr-409 to Phe-668 are Cytoplasmic-facing. Phosphoserine is present on residues Ser-450, Ser-453, Ser-476, and Ser-488. The span at His-452–Asn-463 shows a compositional bias: polar residues. 2 disordered regions span residues His-452–Gln-493 and Leu-521–Leu-586. Residues Ser-621 and Ser-624 each carry the phosphoserine modification. An II repeat occupies Cys-656–Gln-920. The chain crosses the membrane as a helical span at residues Gly-669 to Met-693. The Extracellular portion of the chain corresponds to Glu-694 to Ala-704. The chain crosses the membrane as a helical span at residues Met-705 to Phe-728. The Cytoplasmic portion of the chain corresponds to Asp-729–Lys-736. The chain crosses the membrane as a helical span at residues Arg-737 to Ala-756. The Extracellular segment spans residues Arg-757–Ser-762. The chain crosses the membrane as a helical; Voltage-sensor span at residues Val-763 to Leu-782. Over Asn-783–Asn-798 the chain is Cytoplasmic. Residues Leu-799–Gly-819 form a helical membrane-spanning segment. The Extracellular segment spans residues Glu-820–Asp-843. The N-linked (GlcNAc...) asparagine glycan is linked to Asn-828. The segment at residues Phe-844–Trp-864 is an intramembrane region (pore-forming). Residues Ala-865 to Ser-873 lie on the Extracellular side of the membrane. Cysteines 866 and 875 form a disulfide. A helical transmembrane segment spans residues Ile-874–Leu-899. The Cytoplasmic portion of the chain corresponds to Asn-900–Arg-1154. Acidic residues predominate over residues Leu-1015–Ser-1026. Positions Leu-1015–Leu-1035 are disordered. An III repeat occupies Gln-1147–Leu-1456. Residues Ile-1155–Phe-1178 traverse the membrane as a helical segment. Over Glu-1179–Ala-1191 the chain is Extracellular. Residues Leu-1192–Phe-1217 form a helical membrane-spanning segment. The Cytoplasmic segment spans residues Lys-1218–Asn-1223. Residues Ala-1224–Leu-1245 traverse the membrane as a helical segment. The Extracellular segment spans residues Gln-1246–Asp-1249. The chain crosses the membrane as a helical; Voltage-sensor span at residues Val-1250 to Phe-1271. Residues Glu-1272 to Asn-1290 are Cytoplasmic-facing. A helical transmembrane segment spans residues Val-1291 to Ile-1318. Asn-1319, Asn-1335, and Asn-1343 each carry an N-linked (GlcNAc...) asparagine glycan. The Extracellular segment spans residues Asn-1319–Val-1360. The segment at residues Ala-1361 to Ala-1382 is an intramembrane region (pore-forming). Residues Ala-1383–Asn-1398 lie on the Extracellular side of the membrane. A helical membrane pass occupies residues Val-1399 to Ile-1425. The Cytoplasmic segment spans residues Asp-1426 to Asp-1478. Ser-1458 is modified (phosphoserine; by PKC). The IV repeat unit spans residues Ile-1465 to Gln-1764. Residues Ile-1479–Val-1502 traverse the membrane as a helical segment. Over Glu-1503 to Lys-1513 the chain is Extracellular. The chain crosses the membrane as a helical span at residues Ile-1514 to Leu-1537. Topologically, residues Arg-1538–Thr-1543 are cytoplasmic. The helical transmembrane segment at Asn-1544 to Leu-1567 threads the bilayer. The Extracellular segment spans residues Thr-1568 to Phe-1579. A helical; Voltage-sensor transmembrane segment spans residues Arg-1580–Arg-1601. Topologically, residues Thr-1602–Asn-1616 are cytoplasmic. The helical transmembrane segment at Ile-1617–Val-1639 threads the bilayer. Residues Ser-1640–Thr-1653 lie on the Extracellular side of the membrane. Positions Phe-1654–Pro-1676 form an intramembrane region, pore-forming. The Extracellular portion of the chain corresponds to Ile-1677–Val-1704. An N-linked (GlcNAc...) asparagine glycan is attached at Asn-1693. The chain crosses the membrane as a helical span at residues Gly-1705 to Leu-1729. Residues Glu-1730–Pro-1962 are Cytoplasmic-facing. The IQ domain maps to Glu-1858–Pro-1887. Residues Lys-1914–Pro-1962 are disordered. Positions Asp-1928–Gln-1947 are enriched in polar residues.

This sequence belongs to the sodium channel (TC 1.A.1.10) family. Nav1.8/SCN10A subfamily. As to quaternary structure, the channel consists of an ion conducting pore forming alpha-subunit regulated by one or more associated auxiliary subunits SCN1B, SCN2B and SCN3B; electrophysiological properties may vary depending on the type of the associated beta subunits. Found in a number of complexes with PRX, DYNLT1 and PDZD2. Interacts with proteins such as FSTL1, PRX, DYNLT1, PDZD2, S100A10 and many others. Interacts with NEDD4 and NEDD4L. In terms of processing, ubiquitinated by NEDD4L; which promotes its endocytosis. Post-translationally, phosphorylation at Ser-1458 by PKC in a highly conserved cytoplasmic loop slows inactivation of the sodium channel and reduces peak sodium currents. Lacks the cysteine which covalently binds the conotoxin GVIIJ. This cysteine (position 825) is speculated in other sodium channel subunits alpha to be implied in covalent binding with the sodium channel subunit beta-2 or beta-4. In terms of tissue distribution, expressed in nodose ganglia, but not in cortex, hippocampus, cerebellum, liver, heart and skeletal muscle.

The protein resides in the cell membrane. It catalyses the reaction Na(+)(in) = Na(+)(out). Tetrodotoxin-resistant channel that mediates the voltage-dependent sodium ion permeability of excitable membranes. Assuming opened or closed conformations in response to the voltage difference across the membrane, the protein forms a sodium-selective channel through which sodium ions may pass in accordance with their electrochemical gradient. Plays a role in neuropathic pain mechanisms. This Canis lupus familiaris (Dog) protein is Sodium channel protein type 10 subunit alpha (SCN10A).